The chain runs to 478 residues: Chromosomal replication initiator protein DnaA (478 aa).

Positions 1–90 are domain I, interacts with DnaA modulators; sequence MSVELWQQCV…KRSSAPRAVQ (90 aa). Residues 91–141 form a domain II region; the sequence is PASPPPAVVQAAPVAIEEASAARTVDAQPVAPATVRTERSVQVEGGLKHTS. The segment at 142 to 358 is domain III, AAA+ region; the sequence is YLNRAFTFEN…GALKRVIAHS (217 aa). Residues glycine 186, glycine 188, lysine 189, and threonine 190 each coordinate ATP. A domain IV, binds dsDNA region spans residues 359 to 478; sequence HFTNHPITIE…YKNLLRTLTT (120 aa).

Belongs to the DnaA family. As to quaternary structure, oligomerizes as a right-handed, spiral filament on DNA at oriC.

The protein localises to the cytoplasm. In terms of biological role, plays an essential role in the initiation and regulation of chromosomal replication. ATP-DnaA binds to the origin of replication (oriC) to initiate formation of the DNA replication initiation complex once per cell cycle. Binds the DnaA box (a 9 base pair repeat at the origin) and separates the double-stranded (ds)DNA. Forms a right-handed helical filament on oriC DNA; dsDNA binds to the exterior of the filament while single-stranded (ss)DNA is stabiized in the filament's interior. The ATP-DnaA-oriC complex binds and stabilizes one strand of the AT-rich DNA unwinding element (DUE), permitting loading of DNA polymerase. After initiation quickly degrades to an ADP-DnaA complex that is not apt for DNA replication. Binds acidic phospholipids. The polypeptide is Chromosomal replication initiator protein DnaA (Azotobacter vinelandii (strain DJ / ATCC BAA-1303)).